Here is a 140-residue protein sequence, read N- to C-terminus: Ribosome maturation factor RimP (140 aa).

It belongs to the RimP family.

It is found in the cytoplasm. In terms of biological role, required for maturation of 30S ribosomal subunits. The chain is Ribosome maturation factor RimP from Campylobacter jejuni subsp. jejuni serotype O:6 (strain 81116 / NCTC 11828).